Consider the following 461-residue polypeptide: CBL-interacting protein kinase 5 (461 aa).

One can recognise a Protein kinase domain in the interval 12–266; that stretch reads YELGRMLGQG…VEKLVEHPWF (255 aa). Residues 18-26 and Lys41 contribute to the ATP site; that span reads LGQGTFAKV. The active-site Proton acceptor is the Asp134. The tract at residues 152 to 181 is activation loop; it reads DFGLSAFKECQKQDGLLHTTCGTPAYVAPE. The NAF domain maps to 300–334; it reads EGKAKEPASSLKPVSLNAFDIISLSKGFDLSGLFE. The interval 340 to 369 is PPI; it reads KADSRFMTQKPASAIVSKLEQIAETESFKV. The tract at residues 440 to 461 is disordered; that stretch reads HPSLAQSSTLTQSSKSISRHAI. Residues 442–455 are compositionally biased toward low complexity; the sequence is SLAQSSTLTQSSKS.

It belongs to the protein kinase superfamily. CAMK Ser/Thr protein kinase family. SNF1 subfamily. Mn(2+) is required as a cofactor.

The catalysed reaction is L-seryl-[protein] + ATP = O-phospho-L-seryl-[protein] + ADP + H(+). It carries out the reaction L-threonyl-[protein] + ATP = O-phospho-L-threonyl-[protein] + ADP + H(+). Its function is as follows. CIPK serine-threonine protein kinases interact with CBL proteins. Binding of a CBL protein to the regulatory NAF domain of CIPK protein lead to the activation of the kinase in a calcium-dependent manner. The protein is CBL-interacting protein kinase 5 (CIPK5) of Oryza sativa subsp. japonica (Rice).